Consider the following 156-residue polypeptide: Single-stranded DNA-binding protein 1 (156 aa).

The 104-residue stretch at 1 to 104 folds into the SSB domain; sequence MLNRTILVGR…VVADSIQFLE (104 aa). Positions 122-146 are disordered; the sequence is QTRGQSQYSNNKPVKDNPFANANCP.

In terms of assembly, homotetramer.

The polypeptide is Single-stranded DNA-binding protein 1 (ssb1) (Staphylococcus aureus (strain MSSA476)).